The sequence spans 216 residues: Uracil phosphoribosyltransferase (216 aa).

Residues Arg-85, Arg-110, and 135–143 (DPMVATGYS) contribute to the 5-phospho-alpha-D-ribose 1-diphosphate site. Uracil-binding positions include Ile-200 and 205–207 (GDA). Asp-206 lines the 5-phospho-alpha-D-ribose 1-diphosphate pocket.

The protein belongs to the UPRTase family. Mg(2+) is required as a cofactor.

It catalyses the reaction UMP + diphosphate = 5-phospho-alpha-D-ribose 1-diphosphate + uracil. It functions in the pathway pyrimidine metabolism; UMP biosynthesis via salvage pathway; UMP from uracil: step 1/1. Its activity is regulated as follows. Allosterically activated by GTP. Functionally, catalyzes the conversion of uracil and 5-phospho-alpha-D-ribose 1-diphosphate (PRPP) to UMP and diphosphate. This chain is Uracil phosphoribosyltransferase, found in Burkholderia ambifaria (strain MC40-6).